We begin with the raw amino-acid sequence, 260 residues long: Aspartate/glutamate leucyltransferase (260 aa).

Basic and acidic residues predominate over residues 241 to 251 (DRLPEEGDRGP). Positions 241–260 (DRLPEEGDRGPARFPASLTE) are disordered.

Belongs to the R-transferase family. Bpt subfamily.

It localises to the cytoplasm. It carries out the reaction N-terminal L-glutamyl-[protein] + L-leucyl-tRNA(Leu) = N-terminal L-leucyl-L-glutamyl-[protein] + tRNA(Leu) + H(+). It catalyses the reaction N-terminal L-aspartyl-[protein] + L-leucyl-tRNA(Leu) = N-terminal L-leucyl-L-aspartyl-[protein] + tRNA(Leu) + H(+). Functions in the N-end rule pathway of protein degradation where it conjugates Leu from its aminoacyl-tRNA to the N-termini of proteins containing an N-terminal aspartate or glutamate. The chain is Aspartate/glutamate leucyltransferase from Gluconacetobacter diazotrophicus (strain ATCC 49037 / DSM 5601 / CCUG 37298 / CIP 103539 / LMG 7603 / PAl5).